A 426-amino-acid chain; its full sequence is Glutamate-1-semialdehyde 2,1-aminomutase (426 aa).

K265 carries the N6-(pyridoxal phosphate)lysine modification.

Belongs to the class-III pyridoxal-phosphate-dependent aminotransferase family. HemL subfamily. Homodimer. Requires pyridoxal 5'-phosphate as cofactor.

It is found in the cytoplasm. It carries out the reaction (S)-4-amino-5-oxopentanoate = 5-aminolevulinate. It functions in the pathway porphyrin-containing compound metabolism; protoporphyrin-IX biosynthesis; 5-aminolevulinate from L-glutamyl-tRNA(Glu): step 2/2. The polypeptide is Glutamate-1-semialdehyde 2,1-aminomutase (Salmonella arizonae (strain ATCC BAA-731 / CDC346-86 / RSK2980)).